A 156-amino-acid chain; its full sequence is Protein-export protein SecB (156 aa).

It belongs to the SecB family. Homotetramer, a dimer of dimers. One homotetramer interacts with 1 SecA dimer.

The protein localises to the cytoplasm. Functionally, one of the proteins required for the normal export of preproteins out of the cell cytoplasm. It is a molecular chaperone that binds to a subset of precursor proteins, maintaining them in a translocation-competent state. It also specifically binds to its receptor SecA. The protein is Protein-export protein SecB of Paraburkholderia xenovorans (strain LB400).